The sequence spans 78 residues: Large ribosomal subunit protein bL28 (78 aa).

Residues 1 to 26 (MSAYCQVTGRKPSFGKSVSHSHRRTN) are disordered.

The protein belongs to the bacterial ribosomal protein bL28 family.

The chain is Large ribosomal subunit protein bL28 from Corynebacterium jeikeium (strain K411).